Consider the following 995-residue polypeptide: Aconitate hydratase 2, mitochondrial (995 aa).

The N-terminal 83 residues, 1–83 (MYRRATSGVR…PASLRAQARN (83 aa)), are a transit peptide targeting the mitochondrion. Substrate-binding positions include Q187 and 306 to 308 (DSH). C538, C604, and C607 together coordinate [4Fe-4S] cluster. Residues R637, R642, R800, and 881–882 (SR) contribute to the substrate site.

It belongs to the aconitase/IPM isomerase family. As to quaternary structure, monomer. [4Fe-4S] cluster is required as a cofactor. Mostly expressed in roots, leaves and flowers, also present in stems, and, at low levels, in seeds.

The protein localises to the mitochondrion. The catalysed reaction is citrate = D-threo-isocitrate. It participates in carbohydrate metabolism; tricarboxylic acid cycle; isocitrate from oxaloacetate: step 2/2. Functionally, catalyzes the isomerization of citrate to isocitrate via cis-aconitate. Contributes to oxidative stress tolerance. Involved in acetate assimilation. The protein is Aconitate hydratase 2, mitochondrial of Arabidopsis thaliana (Mouse-ear cress).